The following is a 359-amino-acid chain: DNA replication and repair protein RecF (359 aa).

Residue 30–37 (GPNGSGKT) coordinates ATP.

It belongs to the RecF family.

The protein resides in the cytoplasm. Its function is as follows. The RecF protein is involved in DNA metabolism; it is required for DNA replication and normal SOS inducibility. RecF binds preferentially to single-stranded, linear DNA. It also seems to bind ATP. The sequence is that of DNA replication and repair protein RecF from Vibrio vulnificus (strain CMCP6).